A 485-amino-acid chain; its full sequence is Ribosomal protein uS12 methylthiotransferase RimO (485 aa).

In terms of domain architecture, MTTase N-terminal spans 19 to 135 (VKVGFISLGC…IGEVVAGILA (117 aa)). Cysteine 28, cysteine 64, cysteine 98, cysteine 172, cysteine 176, and cysteine 179 together coordinate [4Fe-4S] cluster. The region spanning 158–387 (ATPGYTAYLK…MEVQQEIARR (230 aa)) is the Radical SAM core domain. The TRAM domain occupies 390–461 (QLQVGRELEV…DYDLLGEATE (72 aa)).

This sequence belongs to the methylthiotransferase family. RimO subfamily. [4Fe-4S] cluster serves as cofactor.

It localises to the cytoplasm. The catalysed reaction is L-aspartate(89)-[ribosomal protein uS12]-hydrogen + (sulfur carrier)-SH + AH2 + 2 S-adenosyl-L-methionine = 3-methylsulfanyl-L-aspartate(89)-[ribosomal protein uS12]-hydrogen + (sulfur carrier)-H + 5'-deoxyadenosine + L-methionine + A + S-adenosyl-L-homocysteine + 2 H(+). Functionally, catalyzes the methylthiolation of an aspartic acid residue of ribosomal protein uS12. The chain is Ribosomal protein uS12 methylthiotransferase RimO from Symbiobacterium thermophilum (strain DSM 24528 / JCM 14929 / IAM 14863 / T).